The following is a 436-amino-acid chain: MSRMYDRSEQLFAEAKTLIPGGVNSPVRAFKSVGRNPVFIERAEGAYLYDVDGNKYVDYVGSWGPMIVGHAHPEVSEALKAAIDRGTSYGAPTELESRLAKLILEAFPAMDMVRMVNSGTEATMSALRLARGYTGRSKIVKFEGCYHGHADSLLIKAGSGALTLGVPTSPGVPANIANNTITAPYNDLETLKAIFQEAGDDIAAIIIEGVPGNMGVVPPAPGYLQGVRELTRQYGALMIVDEVMSGFRVDFGGAQTLYGVEPDLTCLGKIIGGGLPVGAYGGKAEIMEKVSPAGPIYQAGTLSGNPLAMTAGIITLEILKRPGTYAALDEKAAYLADGLAKAAEKAGVPVWTNRVGSMLTGFFTDRPVVDFASACTSDTAAFGTYFRAMLDRGVYLACSQFEAAFLSLAMTKEDLDFTIAAAEEAFQVVAAERAKA.

An N6-(pyridoxal phosphate)lysine modification is found at K269.

This sequence belongs to the class-III pyridoxal-phosphate-dependent aminotransferase family. HemL subfamily. As to quaternary structure, homodimer. Pyridoxal 5'-phosphate serves as cofactor.

The protein resides in the cytoplasm. It carries out the reaction (S)-4-amino-5-oxopentanoate = 5-aminolevulinate. Its pathway is porphyrin-containing compound metabolism; protoporphyrin-IX biosynthesis; 5-aminolevulinate from L-glutamyl-tRNA(Glu): step 2/2. It functions in the pathway porphyrin-containing compound metabolism; chlorophyll biosynthesis. This Heliobacterium modesticaldum (strain ATCC 51547 / Ice1) protein is Glutamate-1-semialdehyde 2,1-aminomutase.